The following is a 225-amino-acid chain: NAD(P)H-quinone oxidoreductase subunit K, chloroplastic (225 aa).

Cys-43, Cys-44, Cys-108, and Cys-139 together coordinate [4Fe-4S] cluster.

This sequence belongs to the complex I 20 kDa subunit family. NDH is composed of at least 16 different subunits, 5 of which are encoded in the nucleus. Requires [4Fe-4S] cluster as cofactor.

The protein resides in the plastid. It is found in the chloroplast thylakoid membrane. The enzyme catalyses a plastoquinone + NADH + (n+1) H(+)(in) = a plastoquinol + NAD(+) + n H(+)(out). It catalyses the reaction a plastoquinone + NADPH + (n+1) H(+)(in) = a plastoquinol + NADP(+) + n H(+)(out). Functionally, NDH shuttles electrons from NAD(P)H:plastoquinone, via FMN and iron-sulfur (Fe-S) centers, to quinones in the photosynthetic chain and possibly in a chloroplast respiratory chain. The immediate electron acceptor for the enzyme in this species is believed to be plastoquinone. Couples the redox reaction to proton translocation, and thus conserves the redox energy in a proton gradient. This is NAD(P)H-quinone oxidoreductase subunit K, chloroplastic from Lolium perenne (Perennial ryegrass).